The primary structure comprises 96 residues: Phosphoribosyl-ATP pyrophosphatase (96 aa).

It belongs to the PRA-PH family.

The protein localises to the cytoplasm. The catalysed reaction is 1-(5-phospho-beta-D-ribosyl)-ATP + H2O = 1-(5-phospho-beta-D-ribosyl)-5'-AMP + diphosphate + H(+). It functions in the pathway amino-acid biosynthesis; L-histidine biosynthesis; L-histidine from 5-phospho-alpha-D-ribose 1-diphosphate: step 2/9. The sequence is that of Phosphoribosyl-ATP pyrophosphatase from Methanococcus aeolicus (strain ATCC BAA-1280 / DSM 17508 / OCM 812 / Nankai-3).